The primary structure comprises 236 residues: tRNA (guanine-N(7)-)-methyltransferase (236 aa).

S-adenosyl-L-methionine-binding residues include E43, D68, N102, and N125. Residues K129 and D161 each contribute to the substrate site.

Belongs to the class I-like SAM-binding methyltransferase superfamily. TrmB family.

The catalysed reaction is guanosine(46) in tRNA + S-adenosyl-L-methionine = N(7)-methylguanosine(46) in tRNA + S-adenosyl-L-homocysteine. Its pathway is tRNA modification; N(7)-methylguanine-tRNA biosynthesis. Its function is as follows. Catalyzes the formation of N(7)-methylguanine at position 46 (m7G46) in tRNA. The chain is tRNA (guanine-N(7)-)-methyltransferase from Ruminiclostridium cellulolyticum (strain ATCC 35319 / DSM 5812 / JCM 6584 / H10) (Clostridium cellulolyticum).